A 374-amino-acid polypeptide reads, in one-letter code: uncharacterized protein (374 aa).

The segment covering 86–104 has biased composition (low complexity); the sequence is RPAATAGTTPATGASGSAR. A disordered region spans residues 86 to 109; that stretch reads RPAATAGTTPATGASGSARPTDAA. The Macro domain occupies 179–354; sequence WWRRSNTTRG…LQRVVFAVHG (176 aa).

This is an uncharacterized protein from Mycobacterium tuberculosis (strain CDC 1551 / Oshkosh).